The sequence spans 556 residues: Sensory neuron membrane protein 2 (556 aa).

The Cytoplasmic segment spans residues 1-6 (MIHWSL). A helical transmembrane segment spans residues 7 to 27 (IVSALGVCVAVLGGYCGWILF). Over 28-522 (PNMVHKKVEQ…KLINTLKTLN (495 aa)) the chain is Extracellular. N-linked (GlcNAc...) asparagine glycans are attached at residues Asn66, Asn274, Asn310, and Asn324. 2 disulfides stabilise this stretch: Cys320/Cys388 and Cys349/Cys415. Residues 523-543 (IVHWATLCGGIGVAVACLIYY) traverse the membrane as a helical segment. Residues 544 to 556 (IYQRGRVVEPPVK) lie on the Cytoplasmic side of the membrane.

This sequence belongs to the CD36 family. As to expression, detected in the head and to a lesser extent in legs and wings.

It is found in the cell membrane. Its function is as follows. Plays an olfactory role that is not restricted to pheromone sensitivity. The chain is Sensory neuron membrane protein 2 from Drosophila melanogaster (Fruit fly).